We begin with the raw amino-acid sequence, 287 residues long: F-actin-capping protein subunit beta (287 aa).

An N-acetylserine modification is found at S2. Phosphoserine occurs at positions 85 and 92.

It belongs to the F-actin-capping protein beta subunit family. In terms of assembly, component of the F-actin capping complex, composed of a heterodimer of an alpha and a beta subunit. Interacts with BSP1 (via C-terminus); leading to recruitment of the F-actin capping complex to actin cortical patches and the acomyosin contractile ring.

The protein localises to the cytoplasm. The protein resides in the cytoskeleton. Its subcellular location is the actin patch. It is found in the bud. It localises to the bud tip. F-actin-capping proteins bind in a Ca(2+)-independent manner to the fast growing ends of actin filaments (barbed end) thereby blocking the exchange of subunits at these ends. Unlike other capping proteins (such as gelsolin and severin), these proteins do not sever actin filaments. This is F-actin-capping protein subunit beta (CAP2) from Saccharomyces cerevisiae (strain ATCC 204508 / S288c) (Baker's yeast).